A 271-amino-acid chain; its full sequence is Small ribosomal subunit protein uS9m (271 aa).

The N-terminal 11 residues, 1 to 11 (MFRSLAKLRCF), are a transit peptide targeting the mitochondrion. The tract at residues 251–271 (KVERKKTGQPKARKKYTWVKR) is disordered. Residues 252–271 (VERKKTGQPKARKKYTWVKR) show a composition bias toward basic residues.

It belongs to the universal ribosomal protein uS9 family. In terms of assembly, component of the mitochondrial small ribosomal subunit (mt-SSU). Mature yeast 74S mitochondrial ribosomes consist of a small (37S) and a large (54S) subunit. The 37S small subunit contains a 15S ribosomal RNA (15S mt-rRNA) and at least 32 different proteins. The 54S large subunit contains a 21S rRNA (21S mt-rRNA) and at least 45 different proteins.

It is found in the mitochondrion. In terms of biological role, component of the mitochondrial ribosome (mitoribosome), a dedicated translation machinery responsible for the synthesis of mitochondrial genome-encoded proteins, including at least some of the essential transmembrane subunits of the mitochondrial respiratory chain. The mitoribosomes are attached to the mitochondrial inner membrane and translation products are cotranslationally integrated into the membrane. This chain is Small ribosomal subunit protein uS9m (mrps9), found in Schizosaccharomyces pombe (strain 972 / ATCC 24843) (Fission yeast).